Here is a 318-residue protein sequence, read N- to C-terminus: uncharacterized protein (318 aa).

This sequence belongs to the asfivirus F317L family.

It localises to the virion. This is an uncharacterized protein from African swine fever virus (isolate Tick/Malawi/Lil 20-1/1983) (ASFV).